The sequence spans 96 residues: Venom protein 3.1 (96 aa).

An N-terminal signal peptide occupies residues 1-25 (MKFSLISVFLFAVFLSNENIFQAIA). The disordered stretch occupies residues 45–84 (EAVMSSSLTNEEESRNWPHRATRNTLEKGQKRSPAARSEI).

Belongs to the non-disulfide-bridged peptide (NDBP) superfamily. In terms of tissue distribution, expressed by the venom gland.

It localises to the secreted. The chain is Venom protein 3.1 from Lychas mucronatus (Chinese swimming scorpion).